A 94-amino-acid polypeptide reads, in one-letter code: Pyrimidine/purine nucleoside phosphorylase (94 aa).

It belongs to the nucleoside phosphorylase PpnP family.

The enzyme catalyses a purine D-ribonucleoside + phosphate = a purine nucleobase + alpha-D-ribose 1-phosphate. The catalysed reaction is adenosine + phosphate = alpha-D-ribose 1-phosphate + adenine. It carries out the reaction cytidine + phosphate = cytosine + alpha-D-ribose 1-phosphate. It catalyses the reaction guanosine + phosphate = alpha-D-ribose 1-phosphate + guanine. The enzyme catalyses inosine + phosphate = alpha-D-ribose 1-phosphate + hypoxanthine. The catalysed reaction is thymidine + phosphate = 2-deoxy-alpha-D-ribose 1-phosphate + thymine. It carries out the reaction uridine + phosphate = alpha-D-ribose 1-phosphate + uracil. It catalyses the reaction xanthosine + phosphate = alpha-D-ribose 1-phosphate + xanthine. Functionally, catalyzes the phosphorolysis of diverse nucleosides, yielding D-ribose 1-phosphate and the respective free bases. Can use uridine, adenosine, guanosine, cytidine, thymidine, inosine and xanthosine as substrates. Also catalyzes the reverse reactions. The polypeptide is Pyrimidine/purine nucleoside phosphorylase (Pseudomonas putida (strain GB-1)).